Here is a 690-residue protein sequence, read N- to C-terminus: Elongation factor G (690 aa).

The tr-type G domain maps to 8 to 282 (EKTRNIGIMA…AVVAYMPSPL (275 aa)). GTP is bound by residues 17-24 (AHIDAGKT), 81-85 (DTPGH), and 135-138 (NKMD).

The protein belongs to the TRAFAC class translation factor GTPase superfamily. Classic translation factor GTPase family. EF-G/EF-2 subfamily.

The protein resides in the cytoplasm. Functionally, catalyzes the GTP-dependent ribosomal translocation step during translation elongation. During this step, the ribosome changes from the pre-translocational (PRE) to the post-translocational (POST) state as the newly formed A-site-bound peptidyl-tRNA and P-site-bound deacylated tRNA move to the P and E sites, respectively. Catalyzes the coordinated movement of the two tRNA molecules, the mRNA and conformational changes in the ribosome. This chain is Elongation factor G, found in Alkaliphilus oremlandii (strain OhILAs) (Clostridium oremlandii (strain OhILAs)).